A 426-amino-acid chain; its full sequence is Serine--tRNA ligase (426 aa).

Position 231-233 (231-233 (TSE)) interacts with L-serine. 262-264 (RSE) provides a ligand contact to ATP. E285 lines the L-serine pocket. 349–352 (EISS) is a binding site for ATP. S385 is an L-serine binding site.

The protein belongs to the class-II aminoacyl-tRNA synthetase family. Type-1 seryl-tRNA synthetase subfamily. Homodimer. The tRNA molecule binds across the dimer.

It localises to the cytoplasm. The catalysed reaction is tRNA(Ser) + L-serine + ATP = L-seryl-tRNA(Ser) + AMP + diphosphate + H(+). The enzyme catalyses tRNA(Sec) + L-serine + ATP = L-seryl-tRNA(Sec) + AMP + diphosphate + H(+). It participates in aminoacyl-tRNA biosynthesis; selenocysteinyl-tRNA(Sec) biosynthesis; L-seryl-tRNA(Sec) from L-serine and tRNA(Sec): step 1/1. In terms of biological role, catalyzes the attachment of serine to tRNA(Ser). Is also able to aminoacylate tRNA(Sec) with serine, to form the misacylated tRNA L-seryl-tRNA(Sec), which will be further converted into selenocysteinyl-tRNA(Sec). The polypeptide is Serine--tRNA ligase (Legionella pneumophila (strain Lens)).